The primary structure comprises 335 residues: Large ribosomal subunit protein uL3 (335 aa).

The tract at residues 1–20 (MATIHRPRRGSLAFSPRKRA) is disordered.

The protein belongs to the universal ribosomal protein uL3 family. Part of the 50S ribosomal subunit. Forms a cluster with proteins L14 and L24e.

In terms of biological role, one of the primary rRNA binding proteins, it binds directly near the 3'-end of the 23S rRNA, where it nucleates assembly of the 50S subunit. The chain is Large ribosomal subunit protein uL3 (rpl3) from Methanothrix harundinacea (strain 6Ac) (Methanosaeta harundinacea).